The primary structure comprises 265 residues: Mlc titration factor A (265 aa).

Residues His-111, His-148, His-152, and Glu-211 each coordinate Zn(2+).

Belongs to the MtfA family. Interacts with Mlc. Zn(2+) serves as cofactor.

The protein resides in the cytoplasm. Involved in the modulation of the activity of the glucose-phosphotransferase system (glucose-PTS). Interacts with the transcriptional repressor Mlc, preventing its interaction with DNA and leading to the modulation of expression of genes regulated by Mlc, including ptsG, which encodes the PTS system glucose-specific EIICB component. Its function is as follows. Shows zinc-dependent metallopeptidase activity. In Escherichia coli O7:K1 (strain IAI39 / ExPEC), this protein is Mlc titration factor A.